A 184-amino-acid chain; its full sequence is ATP synthase subunit b (184 aa).

A helical transmembrane segment spans residues 16 to 36; sequence LIPPIPELVIGLIAFVIVFGF.

This sequence belongs to the ATPase B chain family. F-type ATPases have 2 components, F(1) - the catalytic core - and F(0) - the membrane proton channel. F(1) has five subunits: alpha(3), beta(3), gamma(1), delta(1), epsilon(1). F(0) has three main subunits: a(1), b(2) and c(10-14). The alpha and beta chains form an alternating ring which encloses part of the gamma chain. F(1) is attached to F(0) by a central stalk formed by the gamma and epsilon chains, while a peripheral stalk is formed by the delta and b chains.

It localises to the cell membrane. Functionally, f(1)F(0) ATP synthase produces ATP from ADP in the presence of a proton or sodium gradient. F-type ATPases consist of two structural domains, F(1) containing the extramembraneous catalytic core and F(0) containing the membrane proton channel, linked together by a central stalk and a peripheral stalk. During catalysis, ATP synthesis in the catalytic domain of F(1) is coupled via a rotary mechanism of the central stalk subunits to proton translocation. Component of the F(0) channel, it forms part of the peripheral stalk, linking F(1) to F(0). In Streptomyces coelicolor (strain ATCC BAA-471 / A3(2) / M145), this protein is ATP synthase subunit b.